Here is a 241-residue protein sequence, read N- to C-terminus: Trypsin-1 (241 aa).

Positions methionine 1–valine 13 are cleaved as a signal peptide. Positions phenylalanine 14 to lysine 19 are cleaved as a propeptide — activation peptide. A Peptidase S1 domain is found at isoleucine 20 to alanine 239. Cystine bridges form between cysteine 26–cysteine 155, cysteine 44–cysteine 60, cysteine 128–cysteine 228, cysteine 135–cysteine 201, cysteine 166–cysteine 180, and cysteine 191–cysteine 215. Catalysis depends on charge relay system residues histidine 59 and aspartate 103. Serine 195 serves as the catalytic Charge relay system.

This sequence belongs to the peptidase S1 family.

Its subcellular location is the secreted. It localises to the extracellular space. It catalyses the reaction Preferential cleavage: Arg-|-Xaa, Lys-|-Xaa.. In Gadus morhua (Atlantic cod), this protein is Trypsin-1.